An 831-amino-acid chain; its full sequence is Translation initiation factor IF-2 (831 aa).

Residues 329–499 (TRAPVVTVMG…LLISEMQDLK (171 aa)) form the tr-type G domain. The segment at 338 to 345 (GHVDHGKT) is G1. 338 to 345 (GHVDHGKT) contacts GTP. Residues 363–367 (GITQH) are G2. Residues 385 to 388 (DTPG) form a G3 region. GTP contacts are provided by residues 385-389 (DTPGH) and 439-442 (NKID). The interval 439–442 (NKID) is G4. A G5 region spans residues 475–477 (SAL).

Belongs to the TRAFAC class translation factor GTPase superfamily. Classic translation factor GTPase family. IF-2 subfamily.

It is found in the cytoplasm. In terms of biological role, one of the essential components for the initiation of protein synthesis. Protects formylmethionyl-tRNA from spontaneous hydrolysis and promotes its binding to the 30S ribosomal subunits. Also involved in the hydrolysis of GTP during the formation of the 70S ribosomal complex. This Rickettsia prowazekii (strain Madrid E) protein is Translation initiation factor IF-2 (infB).